The chain runs to 280 residues: 3-methyl-2-oxobutanoate hydroxymethyltransferase (280 aa).

Positions 49 and 88 each coordinate Mg(2+). Residues 49–50 (DS), D88, and K118 contribute to the 3-methyl-2-oxobutanoate site. E120 contacts Mg(2+). E187 serves as the catalytic Proton acceptor.

This sequence belongs to the PanB family. In terms of assembly, homodecamer; pentamer of dimers. Mg(2+) is required as a cofactor.

It localises to the cytoplasm. The catalysed reaction is 3-methyl-2-oxobutanoate + (6R)-5,10-methylene-5,6,7,8-tetrahydrofolate + H2O = 2-dehydropantoate + (6S)-5,6,7,8-tetrahydrofolate. It functions in the pathway cofactor biosynthesis; (R)-pantothenate biosynthesis; (R)-pantoate from 3-methyl-2-oxobutanoate: step 1/2. Functionally, catalyzes the reversible reaction in which hydroxymethyl group from 5,10-methylenetetrahydrofolate is transferred onto alpha-ketoisovalerate to form ketopantoate. This chain is 3-methyl-2-oxobutanoate hydroxymethyltransferase, found in Xanthobacter autotrophicus (strain ATCC BAA-1158 / Py2).